The primary structure comprises 277 residues: MRFGIVARRDREEALKLAYRVYDYLKVRGYDAIVDSETYEHFPHFKEEDIAKLEEFDVDFIIAIGGDGTILRIEHKTKKDIPILSINMGTLGFLTEVEPSETFFAINRLLRGEYYIDERIKLRTYINGEARIPDALNEVAILTGIPGKVIHLRYYVDGGLADEVRADGLVVATPTGSTGYAMSAGGPFVDPRLDTIIIAPLLPLPRTSVPMVVPGYSKIEIEFVTKREVILAVDGQYYEHLSPDIKIRIEKSPRKTKFVRFTREIYPKYTMRIKERH.

The active-site Proton acceptor is the Asp-67. NAD(+) is bound by residues 67–68 (DG), Arg-72, 137–138 (NE), Lys-148, Arg-165, Asp-167, 178–183 (TGYAMS), Leu-202, and Gln-236.

The protein belongs to the NAD kinase family. Requires a divalent metal cation as cofactor.

It is found in the cytoplasm. The enzyme catalyses NAD(+) + ATP = ADP + NADP(+) + H(+). Functionally, involved in the regulation of the intracellular balance of NAD and NADP, and is a key enzyme in the biosynthesis of NADP. Catalyzes specifically the phosphorylation on 2'-hydroxyl of the adenosine moiety of NAD to yield NADP. The sequence is that of NAD kinase from Pyrococcus abyssi (strain GE5 / Orsay).